We begin with the raw amino-acid sequence, 212 residues long: Uracil phosphoribosyltransferase (212 aa).

Residues R78, R103, and 130–138 (DPMLATGGS) each bind 5-phospho-alpha-D-ribose 1-diphosphate. Uracil-binding positions include I193 and 198 to 200 (GDA). D199 serves as a coordination point for 5-phospho-alpha-D-ribose 1-diphosphate.

The protein belongs to the UPRTase family. Mg(2+) serves as cofactor.

The catalysed reaction is UMP + diphosphate = 5-phospho-alpha-D-ribose 1-diphosphate + uracil. The protein operates within pyrimidine metabolism; UMP biosynthesis via salvage pathway; UMP from uracil: step 1/1. Allosterically activated by GTP. Catalyzes the conversion of uracil and 5-phospho-alpha-D-ribose 1-diphosphate (PRPP) to UMP and diphosphate. This chain is Uracil phosphoribosyltransferase, found in Ectopseudomonas mendocina (strain ymp) (Pseudomonas mendocina).